The chain runs to 93 residues: MPENAQVIMRYGPYSSIGLPVEHRTYRLEGLLAVLAEDGHQVLLEKIEDWNVVELMVNGEVVFRCNIKDLEFGGDGKLDPLCREARIAVLNAY.

This sequence belongs to the UPF0728 family.

The chain is UPF0728 protein C10orf53 homolog from Bos taurus (Bovine).